The sequence spans 203 residues: Proteasome subunit beta 2 (203 aa).

Positions 1–9 are cleaved as a propeptide — removed in mature form; by autocatalysis; that stretch reads MGEEVQIGA. The active-site Nucleophile is the Thr-10.

The protein belongs to the peptidase T1B family. In terms of assembly, the 20S proteasome core is composed of 14 alpha and 14 beta subunits that assemble into four stacked heptameric rings, resulting in a barrel-shaped structure. The two inner rings, each composed of seven catalytic beta subunits, are sandwiched by two outer rings, each composed of seven alpha subunits. The catalytic chamber with the active sites is on the inside of the barrel. Has a gated structure, the ends of the cylinder being occluded by the N-termini of the alpha-subunits. Is capped at one or both ends by the proteasome regulatory ATPase, PAN.

It localises to the cytoplasm. The enzyme catalyses Cleavage of peptide bonds with very broad specificity.. The formation of the proteasomal ATPase PAN-20S proteasome complex, via the docking of the C-termini of PAN into the intersubunit pockets in the alpha-rings, triggers opening of the gate for substrate entry. Interconversion between the open-gate and close-gate conformations leads to a dynamic regulation of the 20S proteasome proteolysis activity. Functionally, component of the proteasome core, a large protease complex with broad specificity involved in protein degradation. This chain is Proteasome subunit beta 2, found in Pyrobaculum aerophilum (strain ATCC 51768 / DSM 7523 / JCM 9630 / CIP 104966 / NBRC 100827 / IM2).